Here is a 195-residue protein sequence, read N- to C-terminus: Probable GTP-binding protein EngB (195 aa).

An EngB-type G domain is found at 22-195 (GRPEVALAGR…WAALLPFLTE (174 aa)). Residues 30–37 (GRSNVGKS), 57–61 (GKTQT), 75–78 (DVPG), 142–145 (TKAD), and 174–176 (FSS) contribute to the GTP site. Residues serine 37 and threonine 59 each coordinate Mg(2+).

This sequence belongs to the TRAFAC class TrmE-Era-EngA-EngB-Septin-like GTPase superfamily. EngB GTPase family. It depends on Mg(2+) as a cofactor.

Its function is as follows. Necessary for normal cell division and for the maintenance of normal septation. The sequence is that of Probable GTP-binding protein EngB from Geobacillus thermodenitrificans (strain NG80-2).